Here is a 699-residue protein sequence, read N- to C-terminus: Elongation factor G (699 aa).

The 281-residue stretch at 8-288 (EDYRNFGIMA…AVVDYLPSPI (281 aa)) folds into the tr-type G domain. Residues 17 to 24 (AHIDAGKT), 86 to 90 (DTPGH), and 140 to 143 (NKMD) each bind GTP.

The protein belongs to the TRAFAC class translation factor GTPase superfamily. Classic translation factor GTPase family. EF-G/EF-2 subfamily.

It is found in the cytoplasm. Its function is as follows. Catalyzes the GTP-dependent ribosomal translocation step during translation elongation. During this step, the ribosome changes from the pre-translocational (PRE) to the post-translocational (POST) state as the newly formed A-site-bound peptidyl-tRNA and P-site-bound deacylated tRNA move to the P and E sites, respectively. Catalyzes the coordinated movement of the two tRNA molecules, the mRNA and conformational changes in the ribosome. The chain is Elongation factor G from Rhizobium meliloti (strain 1021) (Ensifer meliloti).